The primary structure comprises 367 residues: Polygalacturonase (367 aa).

The signal sequence occupies residues 1 to 18 (MRTSFVTMLALGAAAVSA). The cysteines at positions 34 and 49 are disulfide-linked. PbH1 repeat units follow at residues 161–191 (ADRLTLDHITIDNSEGDAKGGHNTDAFDVGS), 192–213 (STFITISNANIKNQDDCLAINS), 214–234 (GSNIKFVGGTCSGGHGISIGS), 243–264 (VKDVTISDSTVINSDNGVRVKT), and 272–294 (VSGVTFSNIKLSNIAKYGIVIEQ). The active-site Proton donor is D206. An intrachain disulfide couples C208 to C224. H228 is a catalytic residue. N-linked (GlcNAc...) asparagine glycosylation is found at N318 and N336. Cystine bridges form between C334–C339 and C358–C367.

This sequence belongs to the glycosyl hydrolase 28 family.

The protein localises to the secreted. It carries out the reaction (1,4-alpha-D-galacturonosyl)n+m + H2O = (1,4-alpha-D-galacturonosyl)n + (1,4-alpha-D-galacturonosyl)m.. In Penicillium digitatum (Green mold), this protein is Polygalacturonase (PG1).